A 641-amino-acid polypeptide reads, in one-letter code: Chaperone protein DnaK (641 aa).

Position 200 is a phosphothreonine; by autocatalysis (threonine 200). Residues 606-623 (AEQGGNADAASGNAQASK) are compositionally biased toward low complexity. A disordered region spans residues 606 to 627 (AEQGGNADAASGNAQASKAADD).

This sequence belongs to the heat shock protein 70 family.

In terms of biological role, acts as a chaperone. This Xanthomonas euvesicatoria pv. vesicatoria (strain 85-10) (Xanthomonas campestris pv. vesicatoria) protein is Chaperone protein DnaK.